The chain runs to 690 residues: NF-kappa-B-repressing factor (690 aa).

The active repression domain stretch occupies residues 1–296; that stretch reads MEKILHMAEG…FKHIIGEDLV (296 aa). Positions 25–45 match the Nuclear localization signal motif; that stretch reads KPSKGQKRYLSTYDGQNPPKK. Disordered regions lie at residues 27 to 49, 65 to 85, and 133 to 160; these read SKGQ…QAGS, SSSK…DVNG, and YFDS…PPSQ. Lysine 68 is covalently cross-linked (Glycyl lysine isopeptide (Lys-Gly) (interchain with G-Cter in SUMO2)). The segment covering 139–150 has biased composition (polar residues); the sequence is PAPSSTSQQANC. A DNA-binding region spans residues 296-388; that stretch reads VVCQIGMLSY…RVFLQDHCLA (93 aa). The span at 414-425 shows a compositional bias: polar residues; that stretch reads PTYPSVKSSQCH. The disordered stretch occupies residues 414–436; it reads PTYPSVKSSQCHSGSSPKGSGKK. Residue lysine 500 forms a Glycyl lysine isopeptide (Lys-Gly) (interchain with G-Cter in SUMO2) linkage. A G-patch domain is found at 551–596; it reads EDNIGNQLLRKMGWTGGGLGKSGEGIREPISVKEQHKREGLGLDVE. The R3H domain maps to 600–664; the sequence is KIAKRDIEQI…DRYLVVGRKR (65 aa). Serine 618 is subject to Phosphoserine. Glycyl lysine isopeptide (Lys-Gly) (interchain with G-Cter in SUMO2) cross-links involve residues lysine 666 and lysine 674.

In terms of assembly, interacts with NF-kappa-B. Interacts with XRN2. Interacts (via G-patch domain) with DHX15; promoting the RNA helicase activity of DHX15.

It is found in the nucleus. Its subcellular location is the nucleolus. Enhances the ATPase activity of DHX15 by acting like a brace that tethers mobile sections of DHX15 together, stabilizing a functional conformation with high RNA affinity of DHX15. Involved in the constitutive silencing of the interferon beta promoter, independently of the virus-induced signals, and in the inhibition of the basal and cytokine-induced iNOS promoter activity. Also involved in the regulation of IL-8 transcription. May also act as a DNA-binding transcription regulator: interacts with a specific negative regulatory element (NRE) 5'-AATTCCTCTGA-3' to mediate transcriptional repression of certain NK-kappa-B responsive genes. This is NF-kappa-B-repressing factor (Nkrf) from Mus musculus (Mouse).